Here is a 265-residue protein sequence, read N- to C-terminus: Photosystem II 22 kDa protein, chloroplastic (265 aa).

A chloroplast-targeting transit peptide spans 1-59 (MAQTMLLTSGVTAGHFLRNKSPLAQPKVHHLFLSGNSPVALPSRRQSFVPLALFKPKTK). Tandem repeats lie at residues 54-158 (FKPK…FVDD) and 159-264 (PPTG…DGEE). The next 4 membrane-spanning stretches (helical) occupy residues 96–116 (VAMI…KGIL), 130–150 (AEPL…GALG), 195–215 (LFVG…EIIT), and 229–249 (IPIQ…FFAA).

It belongs to the ELIP/psbS family.

The protein localises to the plastid. Its subcellular location is the chloroplast thylakoid membrane. Plays an important role in non-photochemical quenching (NPQ), a process maintains the balance between dissipation and utilization of light energy to minimize generation of oxidizing molecules, thereby protecting the plant against photo-oxidative damage; acts upstream of DLDG1. Is not necessary for efficient light harvesting and photosynthesis. The polypeptide is Photosystem II 22 kDa protein, chloroplastic (Arabidopsis thaliana (Mouse-ear cress)).